The chain runs to 290 residues: Enoyl-CoA hydratase, mitochondrial (290 aa).

The transit peptide at 1 to 27 directs the protein to the mitochondrion; it reads MATLRVLLSCVRGPLRPPVRCPAWRPF. Position 46 is a phosphothreonine (T46). 98–101 lines the substrate pocket; the sequence is ADIK. K101 carries the N6-acetyllysine; alternate modification. K101 is modified (N6-succinyllysine; alternate). S114 bears the Phosphoserine mark. N6-acetyllysine; alternate is present on K115. K115 is subject to N6-succinyllysine; alternate. The residue at position 118 (K118) is an N6-acetyllysine. G141 lines the substrate pocket. An N6-succinyllysine modification is found at K204. Residue K211 is modified to N6-acetyllysine.

This sequence belongs to the enoyl-CoA hydratase/isomerase family. Homohexamer; dimer of trimers.

Its subcellular location is the mitochondrion matrix. The enzyme catalyses a (3S)-3-hydroxyacyl-CoA = a (2E)-enoyl-CoA + H2O. It catalyses the reaction a (3E)-enoyl-CoA = a 4-saturated (2E)-enoyl-CoA. It carries out the reaction (3E)-hexenoyl-CoA = (2E)-hexenoyl-CoA. The catalysed reaction is (3S)-3-hydroxybutanoyl-CoA = (2E)-butenoyl-CoA + H2O. The enzyme catalyses 3-hydroxyisovaleryl-CoA = 3-methylbut-2-enoyl-CoA + H2O. It catalyses the reaction 3-hydroxypropanoyl-CoA = acryloyl-CoA + H2O. It carries out the reaction 3-hydroxybutanoyl-CoA = (2E)-butenoyl-CoA + H2O. The catalysed reaction is 2-methylpropenoyl-CoA + H2O = (S)-3-hydroxyisobutanoyl-CoA. The enzyme catalyses (3S)-hydroxyhexanoyl-CoA = (2E)-hexenoyl-CoA + H2O. It catalyses the reaction (3S)-hydroxydecanoyl-CoA = (2E)-decenoyl-CoA + H2O. It participates in lipid metabolism; fatty acid beta-oxidation. Its function is as follows. Converts unsaturated trans-2-enoyl-CoA species ((2E)-enoyl-CoA) to the corresponding (3S)-3-hydroxyacyl-CoA species through addition of a water molecule to the double bond. Catalyzes the hydration of medium- and short-chained fatty enoyl-CoA thioesters from 4 carbons long (C4) up to C16. Has high substrate specificity for crotonyl-CoA ((2E)-butenoyl-CoA) and moderate specificity for acryloyl-CoA, 3-methylcrotonyl-CoA (3-methyl-(2E)-butenoyl-CoA) and methacrylyl-CoA ((2E)-2-methylpropenoyl-CoA). Can bind tiglyl-CoA (2-methylcrotonoyl-CoA), but hydrates only a small amount of this substrate. Plays a key role in the beta-oxidation spiral of short- and medium-chain fatty acid oxidation. At a lower rate than the hydratase reaction, catalyzes the isomerase reaction of trans-3-enoyl-CoA species (such as (3E)-hexenoyl-CoA) to trans-2-enoyl-CoA species (such as (2E)-hexenoyl-CoA), which are subsequently hydrated to 3(S)-3-hydroxyacyl-CoA species (such as (3S)-hydroxyhexanoyl-CoA). The sequence is that of Enoyl-CoA hydratase, mitochondrial (ECHS1) from Pongo abelii (Sumatran orangutan).